We begin with the raw amino-acid sequence, 215 residues long: 3,4-dihydroxy-2-butanone 4-phosphate synthase (215 aa).

Residues 37–38 (RE), D42, 150–154 (RPGHT), and E174 contribute to the D-ribulose 5-phosphate site. E38 provides a ligand contact to Mg(2+). A Mg(2+)-binding site is contributed by H153.

It belongs to the DHBP synthase family. Homodimer. It depends on Mg(2+) as a cofactor. Mn(2+) serves as cofactor.

The catalysed reaction is D-ribulose 5-phosphate = (2S)-2-hydroxy-3-oxobutyl phosphate + formate + H(+). It participates in cofactor biosynthesis; riboflavin biosynthesis; 2-hydroxy-3-oxobutyl phosphate from D-ribulose 5-phosphate: step 1/1. Functionally, catalyzes the conversion of D-ribulose 5-phosphate to formate and 3,4-dihydroxy-2-butanone 4-phosphate. In Buchnera aphidicola subsp. Acyrthosiphon pisum (strain 5A), this protein is 3,4-dihydroxy-2-butanone 4-phosphate synthase.